A 374-amino-acid polypeptide reads, in one-letter code: Patatin-2-Kuras 4 (374 aa).

Residues 1 to 11 (MILATTSSTCA) form the signal peptide. Residues 20–217 (LSIDGGGIKG…TVGDPALLSL (198 aa)) enclose the PNPLA domain. Residues 24–29 (GGGIKG) carry the GXGXXG motif. The GXSXG motif lies at 63-67 (GTSTG). Residue serine 65 is the Nucleophile of the active site. Asparagine 103 carries an N-linked (GlcNAc...) asparagine glycan. Aspartate 203 (proton acceptor) is an active-site residue. The short motif at 203 to 205 (DGG) is the DGA/G element. A coiled-coil region spans residues 309 to 372 (ENALTGTTTE…DRKKLRANKA (64 aa)).

Belongs to the patatin family.

The protein localises to the vacuole. In terms of biological role, probable lipolytic acyl hydrolase (LAH), an activity which is thought to be involved in the response of tubers to pathogens. This Solanum tuberosum (Potato) protein is Patatin-2-Kuras 4 (pat2-k4).